Here is a 137-residue protein sequence, read N- to C-terminus: Small ribosomal subunit protein uS12 (137 aa).

Residues Met-1–Lys-57 are disordered. Asp-102 carries the post-translational modification 3-methylthioaspartic acid.

The protein belongs to the universal ribosomal protein uS12 family. Part of the 30S ribosomal subunit. Contacts proteins S8 and S17. May interact with IF1 in the 30S initiation complex.

In terms of biological role, with S4 and S5 plays an important role in translational accuracy. Its function is as follows. Interacts with and stabilizes bases of the 16S rRNA that are involved in tRNA selection in the A site and with the mRNA backbone. Located at the interface of the 30S and 50S subunits, it traverses the body of the 30S subunit contacting proteins on the other side and probably holding the rRNA structure together. The combined cluster of proteins S8, S12 and S17 appears to hold together the shoulder and platform of the 30S subunit. This is Small ribosomal subunit protein uS12 from Lactococcus lactis subsp. lactis (strain IL1403) (Streptococcus lactis).